The chain runs to 514 residues: Anthranilate synthase component 1 (514 aa).

Residues threonine 40 and 291 to 293 (PYM) each bind L-tryptophan. 328–329 (GT) is a chorismate binding site. Glutamate 361 is a Mg(2+) binding site. Chorismate contacts are provided by residues tyrosine 449, arginine 469, 482 to 484 (GAG), and glycine 484. Residue glutamate 497 participates in Mg(2+) binding.

It belongs to the anthranilate synthase component I family. As to quaternary structure, heterotetramer consisting of two non-identical subunits: a beta subunit (TrpG) and a large alpha subunit (TrpE). Requires Mg(2+) as cofactor.

The enzyme catalyses chorismate + L-glutamine = anthranilate + pyruvate + L-glutamate + H(+). The protein operates within amino-acid biosynthesis; L-tryptophan biosynthesis; L-tryptophan from chorismate: step 1/5. Feedback inhibited by tryptophan. Its function is as follows. Part of a heterotetrameric complex that catalyzes the two-step biosynthesis of anthranilate, an intermediate in the biosynthesis of L-tryptophan. In the first step, the glutamine-binding beta subunit (TrpG) of anthranilate synthase (AS) provides the glutamine amidotransferase activity which generates ammonia as a substrate that, along with chorismate, is used in the second step, catalyzed by the large alpha subunit of AS (TrpE) to produce anthranilate. In the absence of TrpG, TrpE can synthesize anthranilate directly from chorismate and high concentrations of ammonia. The chain is Anthranilate synthase component 1 (trpE) from Buchnera aphidicola subsp. Rhopalosiphum maidis.